Consider the following 458-residue polypeptide: Probable asparagine--tRNA ligase, cytoplasmic (458 aa).

The protein belongs to the class-II aminoacyl-tRNA synthetase family.

It is found in the cytoplasm. The catalysed reaction is tRNA(Asn) + L-asparagine + ATP = L-asparaginyl-tRNA(Asn) + AMP + diphosphate + H(+). In Enterocytozoon bieneusi (strain H348) (Microsporidian parasite), this protein is Probable asparagine--tRNA ligase, cytoplasmic.